The following is a 200-amino-acid chain: Formate dehydrogenase iron-sulfur subunit (200 aa).

4Fe-4S ferredoxin-type domains follow at residues 7-37 (VKFY…VGVN), 50-81 (GKEK…VRAD), and 82-111 (GIVL…FPKS). Positions 16, 19, 22, 26, 59, 62, 67, 71, 91, 94, 97, 101, 123, 126, 155, and 159 each coordinate [4Fe-4S] cluster.

As to quaternary structure, formate dehydrogenase is a membrane-bound complex, formed of at least three different subunits. [4Fe-4S] cluster is required as a cofactor.

Its function is as follows. This chain is an electron transfer unit containing 18 cysteine residues, 16 of which occur in four clusters. The chain is Formate dehydrogenase iron-sulfur subunit (fdhB1) from Wolinella succinogenes (strain ATCC 29543 / DSM 1740 / CCUG 13145 / JCM 31913 / LMG 7466 / NCTC 11488 / FDC 602W) (Vibrio succinogenes).